The chain runs to 428 residues: L-glutamyl-[BtrI acyl-carrier protein] decarboxylase (428 aa).

Lys-49 is subject to N6-(pyridoxal phosphate)lysine. Pyridoxal 5'-phosphate is bound by residues Gly-228, 269–272, and Tyr-375; that span reads ESGR. Residues Arg-272 and Tyr-375 each coordinate substrate.

It belongs to the Orn/Lys/Arg decarboxylase class-II family. Homodimer. The cofactor is pyridoxal 5'-phosphate.

The enzyme catalyses gamma-L-glutamyl-[BtrI ACP] + H(+) = 4-aminobutanoyl-[BtrI ACP] + CO2. It participates in antibiotic biosynthesis; butirosin biosynthesis. Its function is as follows. Pyridoxal phosphate-dependent decarboxylase that catalyzes 1 step in the biosynthesis of the side chain of the aminoglycoside antibiotics in the biosynthetic pathway of butirosin. Able to decarboxylate L-ornithine, L-arginine, L-lysine, but not L-glutamate or any D-amino acids. Has low activity with substrates not bound to an acyl-carrier protein. The chain is L-glutamyl-[BtrI acyl-carrier protein] decarboxylase (btrK) from Niallia circulans (Bacillus circulans).